A 97-amino-acid chain; its full sequence is Putative septation protein SpoVG (97 aa).

Belongs to the SpoVG family.

Its function is as follows. Could be involved in septation. The protein is Putative septation protein SpoVG of Anaeromyxobacter sp. (strain Fw109-5).